Here is a 320-residue protein sequence, read N- to C-terminus: o-succinylbenzoate synthase (320 aa).

Lys-133 functions as the Proton donor in the catalytic mechanism. Mg(2+) contacts are provided by Asp-161, Glu-190, and Asp-213. Lys-235 serves as the catalytic Proton acceptor.

This sequence belongs to the mandelate racemase/muconate lactonizing enzyme family. MenC type 1 subfamily. A divalent metal cation serves as cofactor.

It carries out the reaction (1R,6R)-6-hydroxy-2-succinyl-cyclohexa-2,4-diene-1-carboxylate = 2-succinylbenzoate + H2O. It participates in quinol/quinone metabolism; 1,4-dihydroxy-2-naphthoate biosynthesis; 1,4-dihydroxy-2-naphthoate from chorismate: step 4/7. Its pathway is quinol/quinone metabolism; menaquinone biosynthesis. Functionally, converts 2-succinyl-6-hydroxy-2,4-cyclohexadiene-1-carboxylate (SHCHC) to 2-succinylbenzoate (OSB). This Escherichia coli (strain K12 / MC4100 / BW2952) protein is o-succinylbenzoate synthase.